The primary structure comprises 418 residues: Glutamyl-tRNA reductase (418 aa).

Residues 49–52, S107, 112–114, and Q118 contribute to the substrate site; these read TCNR and EPQ. The Nucleophile role is filled by C50. 187 to 192 provides a ligand contact to NADP(+); it reads GAGETI.

The protein belongs to the glutamyl-tRNA reductase family. As to quaternary structure, homodimer.

It carries out the reaction (S)-4-amino-5-oxopentanoate + tRNA(Glu) + NADP(+) = L-glutamyl-tRNA(Glu) + NADPH + H(+). The protein operates within porphyrin-containing compound metabolism; protoporphyrin-IX biosynthesis; 5-aminolevulinate from L-glutamyl-tRNA(Glu): step 1/2. Its function is as follows. Catalyzes the NADPH-dependent reduction of glutamyl-tRNA(Glu) to glutamate 1-semialdehyde (GSA). In Aeromonas salmonicida (strain A449), this protein is Glutamyl-tRNA reductase.